We begin with the raw amino-acid sequence, 574 residues long: Septation ring formation regulator EzrA (574 aa).

Over 1–7 (MPTGTII) the chain is Extracellular. A helical transmembrane segment spans residues 8 to 26 (LIVSIVIILIIAYVACLIV). Residues 27–574 (RKRNDNLLVA…YEKTREAIRY (548 aa)) are Cytoplasmic-facing. Residues 105–189 (SAKNAIDSID…IEVEFSEFVM (85 aa)) adopt a coiled-coil conformation.

It belongs to the EzrA family.

It is found in the cell membrane. Functionally, negative regulator of FtsZ ring formation; modulates the frequency and position of FtsZ ring formation. Inhibits FtsZ ring formation at polar sites. Interacts either with FtsZ or with one of its binding partners to promote depolymerization. This Streptococcus suis (strain 98HAH33) protein is Septation ring formation regulator EzrA.